A 370-amino-acid polypeptide reads, in one-letter code: DNA primase small subunit PriS (370 aa).

Residues D92, D94, and D272 contribute to the active site.

This sequence belongs to the eukaryotic-type primase small subunit family. Heterodimer of a small subunit (PriS) and a large subunit (PriL). The cofactor is Mg(2+). Mn(2+) serves as cofactor.

Catalytic subunit of DNA primase, an RNA polymerase that catalyzes the synthesis of short RNA molecules used as primers for DNA polymerase during DNA replication. The small subunit contains the primase catalytic core and has DNA synthesis activity on its own. Binding to the large subunit stabilizes and modulates the activity, increasing the rate of DNA synthesis while decreasing the length of the DNA fragments, and conferring RNA synthesis capability. The DNA polymerase activity may enable DNA primase to also catalyze primer extension after primer synthesis. May also play a role in DNA repair. The chain is DNA primase small subunit PriS from Picrophilus torridus (strain ATCC 700027 / DSM 9790 / JCM 10055 / NBRC 100828 / KAW 2/3).